The chain runs to 492 residues: Catalase isozyme 1 (492 aa).

Active-site residues include His-65 and Asn-138. Heme is bound at residue Tyr-348.

It belongs to the catalase family. As to quaternary structure, homotetramer. Heme is required as a cofactor. As to expression, high expression in seeds and early seedlings.

The protein localises to the glyoxysome. The catalysed reaction is 2 H2O2 = O2 + 2 H2O. Occurs in almost all aerobically respiring organisms and serves to protect cells from the toxic effects of hydrogen peroxide. The sequence is that of Catalase isozyme 1 (CAT1) from Cucurbita pepo (Vegetable marrow).